The following is a 372-amino-acid chain: Chaperone protein DnaJ (372 aa).

Positions 5–70 constitute a J domain; it reads DYYDLLEVGR…EKRAGYDRYG (66 aa). The segment at 134-212 adopts a CR-type zinc-finger fold; sequence GIQAPIHYVT…CGGSGRRRDE (79 aa). Cysteine 147, cysteine 150, cysteine 164, cysteine 167, cysteine 186, cysteine 189, cysteine 200, and cysteine 203 together coordinate Zn(2+). CXXCXGXG motif repeat units lie at residues 147-154, 164-171, 186-193, and 200-207; these read CDTCQGTG, CHTCQGSG, CTTCYGEG, and CKKCGGSG.

The protein belongs to the DnaJ family. In terms of assembly, homodimer. Zn(2+) is required as a cofactor.

The protein localises to the cytoplasm. Its function is as follows. Participates actively in the response to hyperosmotic and heat shock by preventing the aggregation of stress-denatured proteins and by disaggregating proteins, also in an autonomous, DnaK-independent fashion. Unfolded proteins bind initially to DnaJ; upon interaction with the DnaJ-bound protein, DnaK hydrolyzes its bound ATP, resulting in the formation of a stable complex. GrpE releases ADP from DnaK; ATP binding to DnaK triggers the release of the substrate protein, thus completing the reaction cycle. Several rounds of ATP-dependent interactions between DnaJ, DnaK and GrpE are required for fully efficient folding. Also involved, together with DnaK and GrpE, in the DNA replication of plasmids through activation of initiation proteins. The polypeptide is Chaperone protein DnaJ (Wolbachia sp. subsp. Drosophila simulans (strain wRi)).